The primary structure comprises 265 residues: Molybdenum-pterin-binding protein MopA (265 aa).

2 Mop domains span residues 126-192 (RTSN…MLAA) and 198-264 (RISA…ILAM).

This sequence belongs to the ModE family.

In Rhodobacter capsulatus (Rhodopseudomonas capsulata), this protein is Molybdenum-pterin-binding protein MopA (mopA).